The following is a 400-amino-acid chain: CCA-adding enzyme (400 aa).

Residues G28 and R31 each coordinate ATP. Residues G28 and R31 each coordinate CTP. 2 residues coordinate Mg(2+): D41 and D43. ATP-binding residues include R112, D155, R158, R161, and R164. 5 residues coordinate CTP: R112, D155, R158, R161, and R164.

Belongs to the tRNA nucleotidyltransferase/poly(A) polymerase family. Bacterial CCA-adding enzyme type 3 subfamily. Homodimer. Requires Mg(2+) as cofactor.

It catalyses the reaction a tRNA precursor + 2 CTP + ATP = a tRNA with a 3' CCA end + 3 diphosphate. The catalysed reaction is a tRNA with a 3' CCA end + 2 CTP + ATP = a tRNA with a 3' CCACCA end + 3 diphosphate. Catalyzes the addition and repair of the essential 3'-terminal CCA sequence in tRNAs without using a nucleic acid template. Adds these three nucleotides in the order of C, C, and A to the tRNA nucleotide-73, using CTP and ATP as substrates and producing inorganic pyrophosphate. tRNA 3'-terminal CCA addition is required both for tRNA processing and repair. Also involved in tRNA surveillance by mediating tandem CCA addition to generate a CCACCA at the 3' terminus of unstable tRNAs. While stable tRNAs receive only 3'-terminal CCA, unstable tRNAs are marked with CCACCA and rapidly degraded. This is CCA-adding enzyme from Staphylococcus aureus (strain bovine RF122 / ET3-1).